Consider the following 238-residue polypeptide: 2-C-methyl-D-erythritol 4-phosphate cytidylyltransferase (238 aa).

It belongs to the IspD/TarI cytidylyltransferase family. IspD subfamily.

The catalysed reaction is 2-C-methyl-D-erythritol 4-phosphate + CTP + H(+) = 4-CDP-2-C-methyl-D-erythritol + diphosphate. The protein operates within isoprenoid biosynthesis; isopentenyl diphosphate biosynthesis via DXP pathway; isopentenyl diphosphate from 1-deoxy-D-xylulose 5-phosphate: step 2/6. Catalyzes the formation of 4-diphosphocytidyl-2-C-methyl-D-erythritol from CTP and 2-C-methyl-D-erythritol 4-phosphate (MEP). The protein is 2-C-methyl-D-erythritol 4-phosphate cytidylyltransferase of Acinetobacter baumannii (strain ACICU).